A 216-amino-acid chain; its full sequence is Probable GTP-binding protein EngB (216 aa).

Positions 24 to 205 (QTPELAFVGR…WARIASAATD (182 aa)) constitute an EngB-type G domain. GTP contacts are provided by residues 32–39 (GRSNVGKS), 59–63 (GRTRA), 86–89 (DLPG), 153–156 (TKMD), and 184–186 (FSA). Residues S39 and T61 each coordinate Mg(2+).

Belongs to the TRAFAC class TrmE-Era-EngA-EngB-Septin-like GTPase superfamily. EngB GTPase family. The cofactor is Mg(2+).

Functionally, necessary for normal cell division and for the maintenance of normal septation. The protein is Probable GTP-binding protein EngB of Anaeromyxobacter sp. (strain Fw109-5).